A 383-amino-acid chain; its full sequence is Sulfate adenylyltransferase (383 aa).

This sequence belongs to the sulfate adenylyltransferase family.

The catalysed reaction is sulfate + ATP + H(+) = adenosine 5'-phosphosulfate + diphosphate. Its pathway is sulfur metabolism; hydrogen sulfide biosynthesis; sulfite from sulfate: step 1/3. The protein is Sulfate adenylyltransferase of Halothermothrix orenii (strain H 168 / OCM 544 / DSM 9562).